Reading from the N-terminus, the 350-residue chain is MLPSLQSLTKKVLAGQCVPTNQHYLLKCYDLWWHDGPITFDHNLKLIKSAGIKEGLDLNTALVKAVRENNYNLIKLFAEWGANINYGLVSVNTEHTRDLCRELGAKETLNEEEILQIFIDLKFHKTSSNIILCHEVFSNNPILQKVNNIKMRIEIFWELRELIEKTDLLNNEFSLSALLLKYWYAIAIRYNLKEAIQYFYQKYTHLNTWRLTCALCFNNVFDLHEAYEKDKIHMDIEEMMRIACIKDHNLSTMYYCYVLGANINQAMLTSIQYYNIENMFFCMDLGADAFEEGTIALGEGYKLIKNILSLKIYSPATTPLPKSTDPEIIDHALKNYVSKNMMIFLTYDLR.

The ANK repeat unit spans residues 57–89; the sequence is DLNTALVKAVRENNYNLIKLFAEWGANINYGLV.

It belongs to the asfivirus MGF 360 family.

In terms of biological role, plays a role in virus cell tropism, and may be required for efficient virus replication in macrophages. This African swine fever virus (isolate Warthog/Namibia/Wart80/1980) (ASFV) protein is Protein MGF 360-12L.